Consider the following 697-residue polypeptide: DNA ligase (697 aa).

Residues 34–38, 83–84, and E114 each bind NAD(+); these read DKTYD and SL. K116 acts as the N6-AMP-lysine intermediate in catalysis. NAD(+)-binding residues include R137, E171, K315, and K339. Residues C430, C433, C448, and C453 each coordinate Zn(2+). The BRCT domain maps to 616–697; that stretch reads KKSSKLNNLN…FHNLLKEENA (82 aa).

The protein belongs to the NAD-dependent DNA ligase family. LigA subfamily. Mg(2+) is required as a cofactor. The cofactor is Mn(2+).

The catalysed reaction is NAD(+) + (deoxyribonucleotide)n-3'-hydroxyl + 5'-phospho-(deoxyribonucleotide)m = (deoxyribonucleotide)n+m + AMP + beta-nicotinamide D-nucleotide.. DNA ligase that catalyzes the formation of phosphodiester linkages between 5'-phosphoryl and 3'-hydroxyl groups in double-stranded DNA using NAD as a coenzyme and as the energy source for the reaction. It is essential for DNA replication and repair of damaged DNA. This Mycoplasmopsis synoviae (strain 53) (Mycoplasma synoviae) protein is DNA ligase.